The following is a 1134-amino-acid chain: MMS19 nucleotide excision repair protein homolog (1134 aa).

HEAT repeat units lie at residues 959-998 (QRCFSTIVPILESLIMNSQTSLSRTMLHVALAHVISNVPV), 1002-1047 (LDNT…KGQQ), 1050-1089 (SDNAHIIIECLIKLTSYPHLMVVRETSIQCLVALLELPHR), and 1092-1130 (YPFRREVLQAIEKSLDDPKRKVREEAIRCRQAWASITSG).

The protein belongs to the MET18/MMS19 family. In terms of assembly, part of a complex composed of AE7, CIA1, MMS19 and NAR1. Interacts with AE7.

The protein resides in the nucleus. It is found in the cytoplasm. Functionally, may select specific target apoproteins to which a Fe-S cluster produced by the cytosolic iron-sulfur (Fe-S) protein assembly (CIA) pathway is transferred. The polypeptide is MMS19 nucleotide excision repair protein homolog (Arabidopsis thaliana (Mouse-ear cress)).